A 231-amino-acid polypeptide reads, in one-letter code: Orotidine 5'-phosphate decarboxylase (231 aa).

Residues Asp-11, Lys-34, 61–70 (DLKLHDIPNT), Thr-117, Arg-179, Gln-188, Gly-208, and Arg-209 each bind substrate. The active-site Proton donor is Lys-63.

It belongs to the OMP decarboxylase family. Type 1 subfamily. In terms of assembly, homodimer.

The catalysed reaction is orotidine 5'-phosphate + H(+) = UMP + CO2. It functions in the pathway pyrimidine metabolism; UMP biosynthesis via de novo pathway; UMP from orotate: step 2/2. Its function is as follows. Catalyzes the decarboxylation of orotidine 5'-monophosphate (OMP) to uridine 5'-monophosphate (UMP). In Streptococcus thermophilus (strain ATCC BAA-491 / LMD-9), this protein is Orotidine 5'-phosphate decarboxylase.